The primary structure comprises 508 residues: MGLPWYRVHTVVLNDPGRLLSVHIMHTALVSGWAGSMALYELAVFDPSDPVLDPMWRQGMFVIPFMTRLGITNSWGGWSITGGTVTNPGIWSYEGVAGAHIVFSGLCFLAAIWHWVYWDLEIFCDERTGKPSLDLPKIFGIHLFLSGVACFGFGAFHVTGLYGPGIWVSDPYGLTGKVQPVNPSWGAEGFDPFVPGGIASHHIAAGTLGILAGLFHLSVRPPQRLYKALRMGNIETVLSSSIAAVFFAAFVVAGTMWYGSATTPIELFGPTRYQWDQGYFQQEIYRRVNAGLAENLSLSESWSKIPDKLAFYDYIGNNPAKGGLFRAGSMDNGDGIAVGWLGHPVFRDKEGHELFVRRMPTFFETFPVVLVDGDGIVRADVPFRRAESKYSVEQVGVTVEFYGGELDGVSYNDPATVKKYARRAQLGEIFELDRATLKSDGVFRSSPRGWFTFGHASFALLFFFGHIWHGARTLFRDVFAGIDPDLDAQVEFGAFQKLGDPTTRRQVV.

Helical transmembrane passes span 21 to 36 (SVHI…WAGS), 101 to 115 (IVFS…IWHW), 140 to 156 (GIHL…FGAF), 203 to 218 (IAAG…FHLS), 237 to 252 (VLSS…AFVV), and 457 to 472 (SFAL…HGAR).

It belongs to the PsbB/PsbC family. PsbB subfamily. In terms of assembly, PSII is composed of 1 copy each of membrane proteins PsbA, PsbB, PsbC, PsbD, PsbE, PsbF, PsbH, PsbI, PsbJ, PsbK, PsbL, PsbM, PsbT, PsbX, PsbY, PsbZ, Psb30/Ycf12, at least 3 peripheral proteins of the oxygen-evolving complex and a large number of cofactors. It forms dimeric complexes. Binds multiple chlorophylls. PSII binds additional chlorophylls, carotenoids and specific lipids. is required as a cofactor.

Its subcellular location is the plastid. It localises to the chloroplast thylakoid membrane. In terms of biological role, one of the components of the core complex of photosystem II (PSII). It binds chlorophyll and helps catalyze the primary light-induced photochemical processes of PSII. PSII is a light-driven water:plastoquinone oxidoreductase, using light energy to abstract electrons from H(2)O, generating O(2) and a proton gradient subsequently used for ATP formation. This is Photosystem II CP47 reaction center protein from Nymphaea alba (White water-lily).